The primary structure comprises 544 residues: MASLQLYGVKTPGLALSSKRLEFASKGACFSVTLPSSSAVFRDVEHSCRNIGLRVSCEALRVDLLQRKEPETCDSSGTGKELTCVMKFGGSSVESAERMKEVANLILSFPDERPVIVLSAMGKTTNKLLKAGEKAVTCGVTNVESIEELSFIKELHLRTAHELGVETTVIEKHLEGLHQLLKGISMMKELTLRTRDYLVSFGECMSTRLFSAYLNKIGHKARQYDAFEIGFITTDDFTNADILEATYPAVSKTLVGDWSKENAVPVVTGYLGKGWRSCAITTLGRGGSDLTATTIGKALGLREIQVWKDVDGVLTCDPNIYPGAQSVPYLTFDEAAELAYFGAQVLHPLSMRPARDGDIPVRVKNSYNPTAPGTVITRSRDMSKAVLTSIVLKRNVTMLDIASTRMLGQYGFLAKVFTTFEDLGISVDVVATSEVSISLTLDPAKLWGRELIQRVNELDNLVEELEKIAVVKLLQRRSIISLIGNVQKSSLILEKVFQVFRSNGVNVQMISQGASKVNISLIVNDEEAEQCVRALHSAFFETDP.

The N-terminal 84 residues, 1 to 84 (MASLQLYGVK…SSGTGKELTC (84 aa)), are a transit peptide targeting the chloroplast. ATP-binding residues include K87, G90, and S119. E203 lines the substrate pocket. ACT domains lie at 401 to 479 (IAST…RRSI) and 481 to 544 (SLIG…ETDP).

This sequence belongs to the aspartokinase family. As to expression, expressed in stems, leaves, floral organs and young seedlings.

The protein localises to the plastid. The protein resides in the chloroplast. The enzyme catalyses L-aspartate + ATP = 4-phospho-L-aspartate + ADP. The protein operates within amino-acid biosynthesis; L-lysine biosynthesis via DAP pathway; (S)-tetrahydrodipicolinate from L-aspartate: step 1/4. It functions in the pathway amino-acid biosynthesis; L-methionine biosynthesis via de novo pathway; L-homoserine from L-aspartate: step 1/3. It participates in amino-acid biosynthesis; L-threonine biosynthesis; L-threonine from L-aspartate: step 1/5. Its activity is regulated as follows. Allosterically inhibited by lysine, but not by S-adenosyl-L-methionine (SAM). K(0.5) for lysine in the presence of physiological concentrations of substrates is 12.5 uM. No inhibition by threonine or leucine and no activation or inhibition by alanine, cysteine, isoleucine, serine, valine, methionine, glutamine, asparagine, glutamic acid or arginine. In terms of biological role, involved in the first step of essential amino acids lysine, threonine, methionine and isoleucine synthesis via the aspartate-family pathway. The protein is Aspartokinase 2, chloroplastic (AK2) of Arabidopsis thaliana (Mouse-ear cress).